The primary structure comprises 220 residues: Small ribosomal subunit protein uS3c (220 aa).

Residues 39–120 enclose the KH type-2 domain; that stretch reads IRDFIKNYVK…KLIIDIIRIT (82 aa).

It belongs to the universal ribosomal protein uS3 family. Part of the 30S ribosomal subunit.

Its subcellular location is the plastid. The polypeptide is Small ribosomal subunit protein uS3c (rps3) (Epifagus virginiana (Beechdrops)).